The sequence spans 342 residues: MESIAKAKSLPNKGRTYDSQRPWNRDSPFSFAAWWSTPSTRYLKVDQPSGRDEHDSLDLEDEDVSKYLASHRERQKRRASCAAKAKVLIIGCAVISLFAIIGALGFALGRRATLPGSCASPAHQNPHTPPHPRPTKGEAHDAGHSGSHSSSSSTNNHHHSHDDSPPPPHVGIDKPKQCGESPDEAQSRGCIFEPQLTAWVAPECAFPAVVAEYQDAVGDMMTEWPWFWDTGLQKAVSPEEFPSLQAGNYSVVYTPYQASHALHCLYCWRKVSYALEHGVDWMDARCHQFYHQRHCAFFIADKLLEMEDWRAAAEVDVQGRLTTWTYPLLYHNCVPLSSTMES.

Positions 1 to 22 (MESIAKAKSLPNKGRTYDSQRP) are disordered. Residues 87–107 (VLIIGCAVISLFAIIGALGFA) form a helical membrane-spanning segment. Residues 118 to 186 (CASPAHQNPH…QCGESPDEAQ (69 aa)) are disordered. Residues 144–155 (HSGSHSSSSSTN) show a composition bias toward low complexity. The N-linked (GlcNAc...) asparagine glycan is linked to Asn248.

The protein resides in the membrane. Functionally, part of the gene cluster that mediates the biosynthesis of the phomopsins, a group of hexapeptide mycotoxins which infects lupins and causes lupinosis disease in livestock. The role of phomB within the phomopsins biosynthesis pathway has still to be determined. The pathway starts with the processing of the precursor phomA by several endopeptidases including kexin proteases as well as the cluster-specific S41 family peptidase phomP1 and the oligopeptidase phomG to produce 10 identical copies of the hexapeptide Tyr-Val-Ile-Pro-Ile-Asp. After being excised from the precursor peptide, the core peptides are cyclized and modified post-translationally by enzymes encoded within the gene cluster. The timing and order of proteolysis of the phomA precursor and PTMs are still unknown. Two tyrosinase-like enzymes, phomQ1 and phomQ2, catalyze the chlorination and hydroxylation of Tyr, respectively. PhomYb, is proposed to be involved in the construction of the macrocyclic structure. The other 4 ustYa family proteins may be involved in PTMs that generate the unique structure of phomopsin A. PhomYa is required for the hydroxylation of C-beta of Tyr. PhomYc, phomYd, and phomYe are responsible for the biosynthesis of 2,3-dehydroisoleucine (dIle), 2,3-dehydroaspartic acid (dAsp), and 3,4-dehydroproline (dPro), respectively. While dIle formation by phomYc is indispensable for the installation of dAsp by phomYd, the order of the other PTMs have not been elucidated yet. Most of the biosynthetic enzymes likely have broad substrate specificity, and thus, there might be a metabolic grid from a precursor to phomopsin A. The enzyme(s) responsible for the biosynthesis of 3,4-dehydrovaline (dVal) have also not been identified yet. Finally, phomM acts as an S-adenosylmethionine-dependent alpha-N-methyltransferase that catalyzes two successive N-methylation reactions, converting N-desmethyl-phomopsin A to phomopsin A and phomopsin A further to an N,N-dimethylated congener called phomopsin E. The polypeptide is Phomopsin biosynthesis cluster protein B (Diaporthe leptostromiformis (Lupinosis disease fungus)).